Reading from the N-terminus, the 180-residue chain is Acireductone dioxygenase (180 aa).

His-97, His-99, Glu-103, and His-141 together coordinate Fe(2+). Ni(2+) contacts are provided by His-97, His-99, Glu-103, and His-141.

This sequence belongs to the acireductone dioxygenase (ARD) family. Monomer. Requires Fe(2+) as cofactor. Ni(2+) is required as a cofactor.

It carries out the reaction 1,2-dihydroxy-5-(methylsulfanyl)pent-1-en-3-one + O2 = 3-(methylsulfanyl)propanoate + CO + formate + 2 H(+). The enzyme catalyses 1,2-dihydroxy-5-(methylsulfanyl)pent-1-en-3-one + O2 = 4-methylsulfanyl-2-oxobutanoate + formate + 2 H(+). Its pathway is amino-acid biosynthesis; L-methionine biosynthesis via salvage pathway; L-methionine from S-methyl-5-thio-alpha-D-ribose 1-phosphate: step 5/6. Its function is as follows. Catalyzes 2 different reactions between oxygen and the acireductone 1,2-dihydroxy-3-keto-5-methylthiopentene (DHK-MTPene) depending upon the metal bound in the active site. Fe-containing acireductone dioxygenase (Fe-ARD) produces formate and 2-keto-4-methylthiobutyrate (KMTB), the alpha-ketoacid precursor of methionine in the methionine recycle pathway. Ni-containing acireductone dioxygenase (Ni-ARD) produces methylthiopropionate, carbon monoxide and formate, and does not lie on the methionine recycle pathway. In Yersinia pseudotuberculosis serotype O:1b (strain IP 31758), this protein is Acireductone dioxygenase.